The chain runs to 410 residues: Cathepsin D (410 aa).

Positions 1 to 20 are cleaved as a signal peptide; that stretch reads MKTPGVLLLILGLLASSSFA. The propeptide at 21–64 is activation peptide; that stretch reads IIRIPLRKFTSIRRTMTEVGGSVEDLILKGPITKYSMQSSPKTT. One can recognise a Peptidase A1 domain in the interval 79-405; it reads YYGDIGIGTP…DRDNNRVGFA (327 aa). Disulfide bonds link C91/C160 and C110/C117. The active site involves D97. A glycan (N-linked (GlcNAc...) asparagine) is linked at N134. A glycan (N-linked (GlcNAc...) (high mannose) asparagine) is linked at N261. A disulfide bond links C284 and C288. D293 is an active-site residue. C327 and C364 are oxidised to a cystine.

This sequence belongs to the peptidase A1 family. In terms of assembly, consists of a light chain and a heavy chain. Interacts with ADAM30; this leads to activation of CTSD. Interacts with GRN; stabilizes CTSD; increases its proteolytic activity. Post-translationally, N- and O-glycosylated. Undergoes proteolytic cleavage and activation by ADAM30.

It localises to the lysosome. The protein localises to the melanosome. Its subcellular location is the secreted. It is found in the extracellular space. It catalyses the reaction Specificity similar to, but narrower than, that of pepsin A. Does not cleave the 4-Gln-|-His-5 bond in B chain of insulin.. Functionally, acid protease active in intracellular protein breakdown. Plays a role in APP processing following cleavage and activation by ADAM30 which leads to APP degradation. In Mus musculus (Mouse), this protein is Cathepsin D (Ctsd).